The sequence spans 526 residues: Plant intracellular Ras-group-related LRR protein 5 (526 aa).

LRR repeat units follow at residues 229–252 (LSSL…IGGL), 253–275 (ISLT…IGDL), 276–297 (LNLV…SFNR), 298–321 (LIHL…IGSL), 323–344 (SLKK…ISGC), 346–367 (SMEE…VGKL), 368–390 (STLE…MSSM), 391–414 (ANLK…CYAK), 416–437 (LVKL…LIGN), 438–463 (LEKL…TLSN), and 465–484 (RVLQ…ITEK). Positions 485-492 (GAQAVVQY) match the GVYW; degenerate motif.

It belongs to the SHOC2 family. In terms of tissue distribution, widely expressed but preferentially in roots.

Leucine-rich repeat protein that likely mediates protein interactions, possibly in the context of signal transduction. The protein is Plant intracellular Ras-group-related LRR protein 5 (PIRL5) of Arabidopsis thaliana (Mouse-ear cress).